The primary structure comprises 598 residues: Aspartate--tRNA ligase (598 aa).

Glu-173 serves as a coordination point for L-aspartate. The interval 197–200 is aspartate; the sequence is QLFK. Arg-219 contacts L-aspartate. ATP is bound by residues 219–221 and Gln-228; that span reads RDE. His-449 is an L-aspartate binding site. Glu-483 provides a ligand contact to ATP. Arg-490 serves as a coordination point for L-aspartate. 535–538 lines the ATP pocket; sequence GLDR.

It belongs to the class-II aminoacyl-tRNA synthetase family. Type 1 subfamily. As to quaternary structure, homodimer.

Its subcellular location is the cytoplasm. The enzyme catalyses tRNA(Asp) + L-aspartate + ATP = L-aspartyl-tRNA(Asp) + AMP + diphosphate. In terms of biological role, catalyzes the attachment of L-aspartate to tRNA(Asp) in a two-step reaction: L-aspartate is first activated by ATP to form Asp-AMP and then transferred to the acceptor end of tRNA(Asp). This Shewanella halifaxensis (strain HAW-EB4) protein is Aspartate--tRNA ligase.